A 417-amino-acid chain; its full sequence is UDP-N-acetylglucosamine 1-carboxyvinyltransferase (417 aa).

22–23 (KN) contributes to the phosphoenolpyruvate binding site. Residue Arg94 coordinates UDP-N-acetyl-alpha-D-glucosamine. Catalysis depends on Cys118, which acts as the Proton donor. Cys118 is modified (2-(S-cysteinyl)pyruvic acid O-phosphothioketal). Residues 123-127 (RPIDQ), Asp306, and Ile328 contribute to the UDP-N-acetyl-alpha-D-glucosamine site.

It belongs to the EPSP synthase family. MurA subfamily.

The protein resides in the cytoplasm. It carries out the reaction phosphoenolpyruvate + UDP-N-acetyl-alpha-D-glucosamine = UDP-N-acetyl-3-O-(1-carboxyvinyl)-alpha-D-glucosamine + phosphate. The protein operates within cell wall biogenesis; peptidoglycan biosynthesis. Functionally, cell wall formation. Adds enolpyruvyl to UDP-N-acetylglucosamine. The chain is UDP-N-acetylglucosamine 1-carboxyvinyltransferase from Clostridium botulinum (strain ATCC 19397 / Type A).